A 91-amino-acid polypeptide reads, in one-letter code: Small ribosomal subunit protein uS15 (91 aa).

Belongs to the universal ribosomal protein uS15 family. As to quaternary structure, part of the 30S ribosomal subunit. Forms a bridge to the 50S subunit in the 70S ribosome, contacting the 23S rRNA.

Its function is as follows. One of the primary rRNA binding proteins, it binds directly to 16S rRNA where it helps nucleate assembly of the platform of the 30S subunit by binding and bridging several RNA helices of the 16S rRNA. Functionally, forms an intersubunit bridge (bridge B4) with the 23S rRNA of the 50S subunit in the ribosome. The sequence is that of Small ribosomal subunit protein uS15 from Legionella pneumophila (strain Corby).